The following is a 388-amino-acid chain: MDRISGLPDELLVKIISFVPTKVAVSTSILSKRWESLWKWVPKLECDCTEPALRDFILKNLPLQARIIESLYLRFRRESFLFQDIKLWGGIAISHCLRELRIDFFSHYANPYVILPRSLYTCKSLVTLKLLGLGIRVDVPRDVCLPSLKTLLLQCVAYSEEDPLRLLLSCCPVLEDLVIELDDANQNVKALVVIVPTLQCLSLKIPASCSDERYLIVTPSLKYFKVEDDREIFNALIENMPELEEADIYVTQHIETLLESVTSVKRLTLRQLYNSIDEYKCRAGIVFKQLEQLELSICSDNWTKLVIWLLQNSPNLRVLNLDADSDYERYEEYEQDNWKNIQRSVPKCLKSSLKTLEFAGYTARPEERDFLSFIFKKARCLKTSSISH.

The F-box domain occupies 1–47; it reads MDRISGLPDELLVKIISFVPTKVAVSTSILSKRWESLWKWVPKLECD. The FBD domain occupies 337-388; the sequence is NWKNIQRSVPKCLKSSLKTLEFAGYTARPEERDFLSFIFKKARCLKTSSISH.

This chain is FBD-associated F-box protein At5g60610, found in Arabidopsis thaliana (Mouse-ear cress).